The sequence spans 523 residues: GMP synthase [glutamine-hydrolyzing] (523 aa).

A Glutamine amidotransferase type-1 domain is found at 8–205 (KILILDFGSQ…VVNICGCETK (198 aa)). The active-site Nucleophile is the cysteine 85. Active-site residues include histidine 179 and glutamate 181. The GMPS ATP-PPase domain maps to 206 to 398 (WTAENIIEDA…LGLPAEMLNR (193 aa)). ATP is bound at residue 233–239 (SGGVDSS).

As to quaternary structure, homodimer.

It catalyses the reaction XMP + L-glutamine + ATP + H2O = GMP + L-glutamate + AMP + diphosphate + 2 H(+). Its pathway is purine metabolism; GMP biosynthesis; GMP from XMP (L-Gln route): step 1/1. Its function is as follows. Catalyzes the synthesis of GMP from XMP. The polypeptide is GMP synthase [glutamine-hydrolyzing] (Glaesserella parasuis serovar 5 (strain SH0165) (Haemophilus parasuis)).